A 184-amino-acid polypeptide reads, in one-letter code: Leucine-rich repeat-containing protein 20 (184 aa).

6 LRR repeats span residues 23-44 (GSDT…IYKV), 51-72 (QIHL…FMTT), 75-96 (QLRE…VSSL), 98-120 (HLRA…TTLP), 121-141 (ALET…EKLA), and 145-167 (ALRV…APPL). Phosphoserine is present on Ser-175.

The sequence is that of Leucine-rich repeat-containing protein 20 (Lrrc20) from Mus musculus (Mouse).